The following is a 118-amino-acid chain: Large ribosomal subunit protein bL21c (118 aa).

The protein belongs to the bacterial ribosomal protein bL21 family. In terms of assembly, part of the 50S ribosomal subunit.

Its subcellular location is the plastid. The protein localises to the chloroplast. In terms of biological role, this protein binds to 23S rRNA. In Psilotum nudum (Whisk fern), this protein is Large ribosomal subunit protein bL21c.